Reading from the N-terminus, the 207-residue chain is MSRYRGPRLRIIRRLRNLPGLTNKLVESKKNKVSGSDQSIQKKVSQYCIRLEAKQRLRFNYGLTERQLLNYVRIARCAKGSTGQILLQLLEMRLDNILFRLGVVPTIPSARQLINHRHILVNNRIVDVPSFHCKPKDIITIGAPKTYQSILSKRIESFAKDQVPEHLTLSLSEPKKPKGLVNYLINRESIGLTINELLVVEYYSRKA.

The S4 RNA-binding domain maps to 92-155 (MRLDNILFRL…TYQSILSKRI (64 aa)).

Belongs to the universal ribosomal protein uS4 family. Part of the 30S ribosomal subunit. Contacts protein S5. The interaction surface between S4 and S5 is involved in control of translational fidelity.

The protein localises to the plastid. It localises to the chloroplast. Its function is as follows. One of the primary rRNA binding proteins, it binds directly to 16S rRNA where it nucleates assembly of the body of the 30S subunit. With S5 and S12 plays an important role in translational accuracy. This chain is Small ribosomal subunit protein uS4c (rps4), found in Equisetum scirpoides (Dwarf-scouring rush).